Here is a 218-residue protein sequence, read N- to C-terminus: 5-oxoprolinase subunit B (218 aa).

The protein belongs to the PxpB family. In terms of assembly, forms a complex composed of PxpA, PxpB and PxpC.

The catalysed reaction is 5-oxo-L-proline + ATP + 2 H2O = L-glutamate + ADP + phosphate + H(+). Its function is as follows. Catalyzes the cleavage of 5-oxoproline to form L-glutamate coupled to the hydrolysis of ATP to ADP and inorganic phosphate. This Escherichia coli O157:H7 protein is 5-oxoprolinase subunit B.